We begin with the raw amino-acid sequence, 490 residues long: MSVFLCFLCLLPLILIFLKNLKPSKWKLPPGPKKLPIIGNLHQRRELHPRNSRNLSEKYGPIVFLRYGFVPVVVISSKEAAEEVLKTHDLECCSRPETVGTRAISYNFKDIGFAPYGEDWRTMRKLSVVELFSSKKLQSFRYIREEENDLCVKKLSDLASRRSLVNLEKTLFTLVGSIVCRIGFGINLRECEFVDEDSIDDLVHKSEDVIRNSIFSDFFPGLMGRLIEWIFSERKRLNRLYSEVDTFFQNILDDHLKPGRESSDIIDVMIDMMKKQEKEGDSFKFTTDHLKGMISDIFLAGVGTSSTTLIWAMTELIRNPRVMKKVQDEIRTTLGDKKERITEEDLNQLHYFKLMVKEIFRLHPAAPLLLPRETLSHVKIQGYDIPAKTQIMINAYAIARDPKLWTNPDEFNPDRFLDSSIDYRGLNFELLPFGSGRRICPGMTMGIAIVELGLLNLLYFFDWGLPEKEEAKEIITGNEVALDLVQVFLH.

The chain crosses the membrane as a helical span at residues 1 to 21 (MSVFLCFLCLLPLILIFLKNL). Cys-440 serves as a coordination point for heme.

The protein belongs to the cytochrome P450 family. Requires heme as cofactor.

The protein resides in the membrane. The polypeptide is Cytochrome P450 71B28 (CYP71B28) (Arabidopsis thaliana (Mouse-ear cress)).